An 84-amino-acid chain; its full sequence is MYB-like transcription factor TCL1 (84 aa).

The region spanning 36–73 (TEQEEDLIFRMYRLVGDRWDLIARRVVGREAKEIERYW) is the Myb-like domain.

As to expression, expressed in inflorescences and trichomes of rosette and cauline leaves.

It is found in the nucleus. In terms of biological role, MYB-type transcription factor involved in trichome cell specification. Acts as a negative regulator of trichome patterning and formation by direct binding to the cis-acting regulatory elements of GL1, thus suppressing the expression of GL1. This Arabidopsis thaliana (Mouse-ear cress) protein is MYB-like transcription factor TCL1 (TCL1).